Here is a 329-residue protein sequence, read N- to C-terminus: Protein STRICTOSIDINE SYNTHASE-LIKE 11 (329 aa).

The signal sequence occupies residues 1 to 23 (MMRSFVSLISLLLLLSFSSSVLS). Asn-37 and Asn-79 each carry an N-linked (GlcNAc...) asparagine glycan.

Belongs to the strictosidine synthase family.

The protein localises to the vacuole. It catalyses the reaction 3alpha(S)-strictosidine + H2O = secologanin + tryptamine. It functions in the pathway alkaloid biosynthesis; 3alpha(S)-strictosidine biosynthesis; 3alpha(S)-strictosidine from secologanin and tryptamine: step 1/1. Catalyzes the stereospecific condensation of tryptamine with secologanin to form strictosidine, the key intermediate of indole alkaloid biosynthesis. The protein is Protein STRICTOSIDINE SYNTHASE-LIKE 11 of Arabidopsis thaliana (Mouse-ear cress).